The primary structure comprises 416 residues: Formyl-CoA:oxalate CoA-transferase (416 aa).

CoA is bound by residues 17 to 18, arginine 38, 72 to 75, 96 to 98, histidine 104, and 137 to 140; these read QS, LNTK, NFH, and KAYE. Aspartate 169 (nucleophile) is an active-site residue. 248-250 provides a ligand contact to substrate; sequence GGQ. 273 to 275 lines the CoA pocket; the sequence is QEQ.

Belongs to the CoA-transferase III family. Frc subfamily. Homodimer.

The catalysed reaction is formyl-CoA + oxalate = oxalyl-CoA + formate. Its pathway is metabolic intermediate degradation; oxalate degradation; CO(2) and formate from oxalate: step 1/2. In terms of biological role, involved in the catabolism of oxalate and in the adapatation to low pH via the induction of the oxalate-dependent acid tolerance response (ATR). Catalyzes the transfer of the CoA moiety from formyl-CoA to oxalate. This chain is Formyl-CoA:oxalate CoA-transferase, found in Shigella boydii serotype 18 (strain CDC 3083-94 / BS512).